The sequence spans 203 residues: uncharacterized protein (203 aa).

This is an uncharacterized protein from Haemophilus influenzae (strain ATCC 51907 / DSM 11121 / KW20 / Rd).